The chain runs to 191 residues: UPF0312 protein Shewmr7_1249 (191 aa).

The signal sequence occupies residues 1-22; that stretch reads MKKQLLAALIGGFLLAPMAASA.

This sequence belongs to the UPF0312 family. Type 1 subfamily.

The protein localises to the periplasm. This is UPF0312 protein Shewmr7_1249 from Shewanella sp. (strain MR-7).